Reading from the N-terminus, the 257-residue chain is DNA repair protein RecO (257 aa).

The protein belongs to the RecO family.

Involved in DNA repair and RecF pathway recombination. The polypeptide is DNA repair protein RecO (Synechococcus sp. (strain CC9605)).